The primary structure comprises 335 residues: 2-acylglycerol O-acyltransferase 2 (335 aa).

2 consecutive transmembrane segments (helical) span residues 24–44 (WAVSFLAMAQCCIALYILLLF) and 104–124 (YIMGFHPHGVLVVGAFGNFCT). N-linked (GlcNAc...) asparagine glycosylation occurs at Asn206.

This sequence belongs to the diacylglycerol acyltransferase family.

Its subcellular location is the endoplasmic reticulum membrane. It localises to the cytoplasm. The protein resides in the perinuclear region. It catalyses the reaction a 2-acylglycerol + an acyl-CoA = a 1,2-diacylglycerol + CoA. The catalysed reaction is a 2-acylglycerol + an acyl-CoA = a 1,2-diacyl-sn-glycerol + CoA. The enzyme catalyses a 2-acylglycerol + an acyl-CoA = a 2,3-diacyl-sn-glycerol + CoA. It carries out the reaction a 1-acylglycerol + an acyl-CoA = a 1,2-diacylglycerol + CoA. It catalyses the reaction a 1-acylglycerol + an acyl-CoA = a 1,3-diacylglycerol + CoA. The catalysed reaction is 1-O-alkylglycerol + an acyl-CoA = 1-O-alkyl-3-acylglycerol + CoA. The enzyme catalyses an acyl-CoA + a 1,2-diacyl-sn-glycerol = a triacyl-sn-glycerol + CoA. The protein operates within glycerolipid metabolism; triacylglycerol biosynthesis. In terms of biological role, involved in glycerolipid synthesis and lipid metabolism. Catalyzes the formation of diacylglycerol, the precursor of triacylglycerol, by transferring the acyl chain of a fatty acyl-CoA to a monoacylglycerol. Plays a central role in absorption of dietary fat in the small intestine by catalyzing the resynthesis of triacylglycerol in enterocytes. Has a preference toward monoacylglycerols containing unsaturated fatty acids in an order of C18:3 &gt; C18:2 &gt; C18:1 &gt; C18:0 at sn-2. Able to use 1-monoalkylglycerol (1-MAkG, 1-O-alkylglycerol) as an acyl acceptor for the synthesis of monoalkyl-monoacylglycerol (MAMAG, 1-O-alkyl-3-acylglycerol or 1-O-alkyl-2-acylglycerol) and subsequently, with lower efficiency, may add another acyl chain producing monoalkyl-diacylglycerol (MADAG, 1-O-alkyl-2,3-diacylglycerol). Possesses weak but significant activity with diacylglycerol as substrate, producing triacylglycerol (triacyl-sn-glycerol). This is 2-acylglycerol O-acyltransferase 2 (mogat2) from Xenopus tropicalis (Western clawed frog).